The primary structure comprises 1175 residues: Pyruvate carboxylase (1175 aa).

The region spanning 22–474 (NANKILVANR…WTTFIDDTPS (453 aa)) is the Biotin carboxylation domain. ATP contacts are provided by K140, E224, and H259. An ATP-grasp domain is found at 144-341 (RNLAGKCNVP…IVAAQIQIAA (198 aa)). R316 is a catalytic residue. In terms of domain architecture, Pyruvate carboxyltransferase spans 561-828 (CLIMDTTWRD…NTGITEQNAR (268 aa)). Substrate-binding positions include 569 to 573 (RDAHQ) and R642. Residue D570 participates in a divalent metal cation binding. A divalent metal cation-binding residues include K738, H768, and H770. K738 is modified (N6-carboxylysine). Position 902 (T902) interacts with substrate. Positions 1099–1174 (KADAHNPNEV…DAGDLICKIT (76 aa)) constitute a Biotinyl-binding domain. Position 1140 is an N6-biotinyllysine (K1140).

Biotin serves as cofactor. It depends on Zn(2+) as a cofactor.

It is found in the cytoplasm. The enzyme catalyses hydrogencarbonate + pyruvate + ATP = oxaloacetate + ADP + phosphate + H(+). Its pathway is carbohydrate biosynthesis; gluconeogenesis. Pyruvate carboxylase catalyzes a 2-step reaction, involving the ATP-dependent carboxylation of the covalently attached biotin in the first step and the transfer of the carboxyl group to pyruvate in the second. The sequence is that of Pyruvate carboxylase (PYC) from Pichia angusta (Yeast).